Here is a 364-residue protein sequence, read N- to C-terminus: Large ribosomal subunit protein uL22m (364 aa).

The protein belongs to the universal ribosomal protein uL22 family. As to quaternary structure, component of the mitochondrial large ribosomal subunit (mt-LSU). Mature N.crassa 74S mitochondrial ribosomes consist of a small (37S) and a large (54S) subunit. The 37S small subunit contains a 16S ribosomal RNA (16S mt-rRNA) and 32 different proteins. The 54S large subunit contains a 23S rRNA (23S mt-rRNA) and 42 different proteins. uL22m forms the wall of the exit tunnel.

Its subcellular location is the mitochondrion. In terms of biological role, component of the mitochondrial ribosome (mitoribosome), a dedicated translation machinery responsible for the synthesis of mitochondrial genome-encoded proteins, including at least some of the essential transmembrane subunits of the mitochondrial respiratory chain. The mitoribosomes are attached to the mitochondrial inner membrane and translation products are cotranslationally integrated into the membrane. The polypeptide is Large ribosomal subunit protein uL22m (mrpl22) (Neurospora crassa (strain ATCC 24698 / 74-OR23-1A / CBS 708.71 / DSM 1257 / FGSC 987)).